The sequence spans 939 residues: Intimin (939 aa).

A signal peptide spans 1 to 41 (MITHGFYARTRHKHKLKKTFIMLSAGLGLFFYVNQNSFANG). Positions 40–153 (NGENYFKLGS…KLTKMSPDVT (114 aa)) are peptidoglycan-binding. Positions 40 to 153 (NGENYFKLGS…KLTKMSPDVT (114 aa)) are sufficient for homodimerization. Residues 40–212 (NGENYFKLGS…LQAWLQHYGT (173 aa)) are required for periplasmic localization. The LysM domain occupies 63–112 (LFYTLKTGETVADLSKSQDINLSTIWSLNKHLYSSESEMMKAAPGQQIIL). The segment at 189–430 (DTALGIAGNQ…PQYVNELRTL (242 aa)) is inverse autotransporter. The segment at 402–411 (LYSMQFRYQF) is signature sequence for beta-barrel assembly machinery (BAM), which recognizes the unfolded beta-barrel in the periplasm. 2 consecutive Big-1 domains span residues 560–653 (VTDF…VIFV) and 660–751 (ITEI…VEFF). Residues 750–939 (FFTTLTIDDG…ESNAYATCVK (190 aa)) form a required and sufficient for interaction with intimin receptor Tir region. Residues 842-939 (LIVPNMSKRV…ESNAYATCVK (98 aa)) form a C-type lectin domain region. The intimin receptor Tir-binding stretch occupies residues 842–939 (LIVPNMSKRV…ESNAYATCVK (98 aa)). C860 and C937 form a disulfide bridge.

The protein belongs to the intimin/invasin family. In terms of assembly, homodimer. Interacts with Tir.

Its subcellular location is the cell outer membrane. An inverse autotransporter. Adhesin, which mediates attachment to the human intestine epithelial cells. Necessary for the production of attaching and effacing lesions on infected human tissue culture cells. Anchored to the outer membrane by binding to peptidoglycan (PGN) via its periplasmic domain, thus helping in receptor interactions during host invasion. PGN-binding may also aid in resisting mechanical and chemical stress during transit of the bacterium through the gastrointestinal tract of the host. Periplasmic domain binds purified E.coli PGN sacculi under acidic conditions in vitro and in vivo, but does not bind to chitin. Periplasmic domain binds PGN sacculi with an apparent dissociation constant (Kd) of 0.8 uM. No binding to PGN in vitro at normal physiological pH 7.4. This chain is Intimin, found in Escherichia coli O127:H6 (strain E2348/69 / EPEC).